We begin with the raw amino-acid sequence, 1243 residues long: Serine/threonine-protein kinase/endoribonuclease IRE1 (1243 aa).

The first 35 residues, methionine 1–alanine 35, serve as a signal peptide directing secretion. Residues glutamine 36 to asparagine 585 lie on the Lumenal side of the membrane. Disordered regions lie at residues histidine 70 to tyrosine 132 and glutamine 149 to serine 172. Residues proline 73–asparagine 85 show a composition bias toward basic and acidic residues. The span at glutamine 90–histidine 99 shows a compositional bias: polar residues. Residues serine 163 to serine 172 are compositionally biased toward low complexity. Residues asparagine 226, asparagine 470, and asparagine 554 are each glycosylated (N-linked (GlcNAc...) asparagine). The chain crosses the membrane as a helical span at residues serine 586–tyrosine 606. The Cytoplasmic portion of the chain corresponds to asparagine 607–leucine 1243. Residues glycine 638–threonine 765 form a disordered region. Over residues proline 650 to glutamine 660 the composition is skewed to low complexity. Positions glutamate 674–serine 693 are enriched in basic and acidic residues. The span at lysine 732–glycine 749 shows a compositional bias: basic residues. In terms of domain architecture, Protein kinase spans valine 809–phenylalanine 1105. Residues leucine 815–valine 823 and lysine 837 contribute to the ATP site. Serine 819, lysine 837, glutamate 881, and cysteine 883 together coordinate ADP. Aspartate 931 (proton acceptor) is an active-site residue. Positions 936 and 953 each coordinate Mg(2+). The 133-residue stretch at proline 1108–proline 1240 folds into the KEN domain.

Belongs to the protein kinase superfamily. Ser/Thr protein kinase family. It depends on Mg(2+) as a cofactor. Post-translationally, autophosphorylated mainly on serine residues; phosphorylation enables nucleotide binding by the active site.

It is found in the endoplasmic reticulum membrane. The enzyme catalyses L-seryl-[protein] + ATP = O-phospho-L-seryl-[protein] + ADP + H(+). It carries out the reaction L-threonyl-[protein] + ATP = O-phospho-L-threonyl-[protein] + ADP + H(+). In terms of biological role, senses unfolded proteins in the lumen of the endoplasmic reticulum via its N-terminal domain which leads to enzyme auto-activation. The active endoribonuclease domain splices precursor mRNAs to produce their mature form which then induces transcription of UPR target genes. The chain is Serine/threonine-protein kinase/endoribonuclease IRE1 from Hypocrea jecorina (strain QM6a) (Trichoderma reesei).